Reading from the N-terminus, the 664-residue chain is Transketolase 1 (664 aa).

H26 is a binding site for substrate. Thiamine diphosphate-binding positions include H66 and 114–116 (GPL). D155 is a binding site for Mg(2+). Thiamine diphosphate-binding residues include G156 and N185. Positions 185 and 187 each coordinate Mg(2+). Residues H260, R357, and S384 each coordinate substrate. H260 contacts thiamine diphosphate. Residue E411 is the Proton donor of the active site. Residue F437 participates in thiamine diphosphate binding. Positions 461, 469, and 520 each coordinate substrate.

The protein belongs to the transketolase family. Homodimer. Requires Mg(2+) as cofactor. Ca(2+) is required as a cofactor. It depends on Mn(2+) as a cofactor. The cofactor is Co(2+). Thiamine diphosphate serves as cofactor.

It carries out the reaction D-sedoheptulose 7-phosphate + D-glyceraldehyde 3-phosphate = aldehydo-D-ribose 5-phosphate + D-xylulose 5-phosphate. Functionally, catalyzes the transfer of a two-carbon ketol group from a ketose donor to an aldose acceptor, via a covalent intermediate with the cofactor thiamine pyrophosphate. This chain is Transketolase 1 (tkt1), found in Vibrio vulnificus (strain YJ016).